Reading from the N-terminus, the 123-residue chain is TYMS opposite strand protein (123 aa).

The tract at residues 57 to 111 (MRPLPRRIEVRTKRGPQRPAAPERSPQPRLPPSRHPSRRGPRRHLSGCSAPACRI) is disordered. The segment covering 91–101 (HPSRRGPRRHL) has biased composition (basic residues).

The protein is TYMS opposite strand protein (TYMSOS) of Homo sapiens (Human).